We begin with the raw amino-acid sequence, 435 residues long: MNQQTVNVIGAGLAGSEAAWQLAKRGIQVKLYEMRPVRQTAAHHTDKFAELVCSNSLRSNTLANAVGVLKEEMRALDSAIIQSADKCSVPAGGALAVDRHEFAQSVTDLVKNHPNVTVLTEEVTEIPEGPTVIATGPLTSESLSQQLKELTGEEYLYFYDAAAPIVEKDSLDMEKVYLKSRYDKGEAAYLNCPMTEEEFDRFYEALTTAETVPLKEFEKEIFFEGCMPIEVMAKRGKKTMLFGPMKPVGLEDPKTGKRPYAVVQLRQDDAAGTLYNIVGFQTHLKWGDQKEVLKLIPGLENVDIVRYGVMHRNTFINSPSLLNPTYQFKQRNDLFFAGQMTGVEGYVESAASGLVAGINAAKLVLGQDLVTFPQETAIGSMAHYITTTNQKNFQPMNANFGLLKELPVKIKNKKERNEEYAKRAIETIQTISKTI.

Glycine 10–glycine 15 is a binding site for FAD.

Belongs to the MnmG family. TrmFO subfamily. FAD serves as cofactor.

The protein resides in the cytoplasm. The enzyme catalyses uridine(54) in tRNA + (6R)-5,10-methylene-5,6,7,8-tetrahydrofolate + NADH + H(+) = 5-methyluridine(54) in tRNA + (6S)-5,6,7,8-tetrahydrofolate + NAD(+). It carries out the reaction uridine(54) in tRNA + (6R)-5,10-methylene-5,6,7,8-tetrahydrofolate + NADPH + H(+) = 5-methyluridine(54) in tRNA + (6S)-5,6,7,8-tetrahydrofolate + NADP(+). Functionally, catalyzes the folate-dependent formation of 5-methyl-uridine at position 54 (M-5-U54) in all tRNAs. The polypeptide is Methylenetetrahydrofolate--tRNA-(uracil-5-)-methyltransferase TrmFO (Bacillus velezensis (strain DSM 23117 / BGSC 10A6 / LMG 26770 / FZB42) (Bacillus amyloliquefaciens subsp. plantarum)).